The following is a 439-amino-acid chain: Putative porin QuiX (439 aa).

Residues 1–22 (MRHFFKLGLVSAAVLGSQMTLA) form the signal peptide.

Belongs to the OprB family.

It is found in the cell outer membrane. Its function is as follows. Could be involved in the transport of quinate or shikimate. This is Putative porin QuiX (quiX) from Acinetobacter baylyi (strain ATCC 33305 / BD413 / ADP1).